The primary structure comprises 265 residues: Probable aquaporin TIP3-2 (265 aa).

The next 2 membrane-spanning stretches (helical) occupy residues 32 to 52 and 62 to 82; these read LSEF…VYGL and LGGL…AVAV. The NPA 1 signature appears at 92 to 94; that stretch reads NPA. 3 helical membrane passes run 110–130, 151–171, and 179–199; these read AALY…LLRL, ALLL…ATAV, and DIAP…GGPF. The short motif at 205-207 is the NPA 2 element; that stretch reads NPA. Residues 223-243 form a helical membrane-spanning segment; it reads WVYWLGPLIGAGMAGALYEFV.

It belongs to the MIP/aquaporin (TC 1.A.8) family. TIP (TC 1.A.8.10) subfamily. In terms of tissue distribution, expressed in leaves and at lower levels in roots.

The protein resides in the vacuole membrane. Its function is as follows. Aquaporins facilitate the transport of water and small neutral solutes across cell membranes. May be involved in transport from the vacuolar compartment to the cytoplasm. The chain is Probable aquaporin TIP3-2 (TIP3-2) from Oryza sativa subsp. japonica (Rice).